Consider the following 391-residue polypeptide: CBS domain-containing protein CBSX5 (391 aa).

2 consecutive CBS domains span residues 16 to 81 (GKPP…DHDH) and 331 to 391 (MARK…ENDM).

This is CBS domain-containing protein CBSX5 (CBSX5) from Arabidopsis thaliana (Mouse-ear cress).